Reading from the N-terminus, the 880-residue chain is DNA double-strand break repair Rad50 ATPase (880 aa).

ATP contacts are provided by residues arginine 12, 32 to 38 (NGSGKSS), and glutamine 138. Coiled coils occupy residues 225 to 336 (GELE…VIKE) and 391 to 744 (GEVI…QALN). A Zinc-hook domain is found at 397–494 (LESLEKERTE…NLRKLEIKLR (98 aa)). Residues cysteine 442 and cysteine 445 each coordinate Zn(2+). Residue 789–794 (FLSGGE) coordinates ATP.

Belongs to the SMC family. RAD50 subfamily. In terms of assembly, homodimer. Forms a heterotetramer composed of two Mre11 subunits and two Rad50 subunits. The cofactor is Zn(2+).

Part of the Rad50/Mre11 complex, which is involved in the early steps of DNA double-strand break (DSB) repair. The complex may facilitate opening of the processed DNA ends to aid in the recruitment of HerA and NurA. Rad50 controls the balance between DNA end bridging and DNA resection via ATP-dependent structural rearrangements of the Rad50/Mre11 complex. In Pyrococcus abyssi (strain GE5 / Orsay), this protein is DNA double-strand break repair Rad50 ATPase.